Here is a 186-residue protein sequence, read N- to C-terminus: Cell division protein ZapC (186 aa).

It belongs to the ZapC family. As to quaternary structure, interacts directly with FtsZ.

It is found in the cytoplasm. Its function is as follows. Contributes to the efficiency of the cell division process by stabilizing the polymeric form of the cell division protein FtsZ. Acts by promoting interactions between FtsZ protofilaments and suppressing the GTPase activity of FtsZ. The sequence is that of Cell division protein ZapC from Musicola paradisiaca (strain Ech703) (Dickeya paradisiaca).